Here is a 223-residue protein sequence, read N- to C-terminus: 2-C-methyl-D-erythritol 4-phosphate cytidylyltransferase (223 aa).

It belongs to the IspD/TarI cytidylyltransferase family. IspD subfamily.

The enzyme catalyses 2-C-methyl-D-erythritol 4-phosphate + CTP + H(+) = 4-CDP-2-C-methyl-D-erythritol + diphosphate. The protein operates within isoprenoid biosynthesis; isopentenyl diphosphate biosynthesis via DXP pathway; isopentenyl diphosphate from 1-deoxy-D-xylulose 5-phosphate: step 2/6. In terms of biological role, catalyzes the formation of 4-diphosphocytidyl-2-C-methyl-D-erythritol from CTP and 2-C-methyl-D-erythritol 4-phosphate (MEP). In Prochlorococcus marinus (strain AS9601), this protein is 2-C-methyl-D-erythritol 4-phosphate cytidylyltransferase.